Reading from the N-terminus, the 185-residue chain is Virulence membrane protein PagC (185 aa).

An N-terminal signal peptide occupies residues 1 to 23 (MKNIILSTLVITTSVLVVNVAQA).

It belongs to the outer membrane OOP (TC 1.B.6) superfamily. Ail family.

The protein resides in the cell outer membrane. Functionally, essential for full virulence and survival within macrophages. This Salmonella typhimurium (strain LT2 / SGSC1412 / ATCC 700720) protein is Virulence membrane protein PagC (pagC).